We begin with the raw amino-acid sequence, 82 residues long: Neuropeptide-like peptide 36 (82 aa).

This is Neuropeptide-like peptide 36 (nlp-36) from Caenorhabditis elegans.